The chain runs to 356 residues: S-adenosylmethionine:tRNA ribosyltransferase-isomerase (356 aa).

This sequence belongs to the QueA family. Monomer.

Its subcellular location is the cytoplasm. It carries out the reaction 7-aminomethyl-7-carbaguanosine(34) in tRNA + S-adenosyl-L-methionine = epoxyqueuosine(34) in tRNA + adenine + L-methionine + 2 H(+). It participates in tRNA modification; tRNA-queuosine biosynthesis. Its function is as follows. Transfers and isomerizes the ribose moiety from AdoMet to the 7-aminomethyl group of 7-deazaguanine (preQ1-tRNA) to give epoxyqueuosine (oQ-tRNA). This is S-adenosylmethionine:tRNA ribosyltransferase-isomerase from Shigella boydii serotype 18 (strain CDC 3083-94 / BS512).